The sequence spans 428 residues: Lysophosphatidic acid phosphatase type 6 (428 aa).

The N-terminal 32 residues, 1 to 32, are a transit peptide targeting the mitochondrion; it reads MITGVFSMRLWTPVGVLTSLAYCLHQRRVALA. Positions 58–168 are substrate binding; that stretch reads RHGARSPLKP…VFIRSTNIFR (111 aa). The active-site Nucleophile is His-59. Asp-335 (proton donor) is an active-site residue.

This sequence belongs to the histidine acid phosphatase family. In terms of assembly, monomer. As to expression, highly expressed in kidney, heart, small intestine, muscle, liver, prostate, testis, ovary and weakly expressed in thymus and colon.

Its subcellular location is the mitochondrion. The enzyme catalyses a phosphate monoester + H2O = an alcohol + phosphate. It carries out the reaction 1-(9Z-octadecenoyl)-sn-glycero-3-phosphate + H2O = 1-(9Z-octadecenoyl)-sn-glycerol + phosphate. Its function is as follows. Hydrolyzes lysophosphatidic acid (LPA) containing a medium length fatty acid chain to the corresponding monoacylglycerol. Has highest activity with lysophosphatidic acid containing myristate (C14:0), monounsaturated oleate (C18:1) or palmitate (C16:0), and lower activity with C18:0 and C6:0 lysophosphatidic acid. This chain is Lysophosphatidic acid phosphatase type 6 (ACP6), found in Homo sapiens (Human).